The chain runs to 211 residues: CASP-like protein 3A1 (211 aa).

The Cytoplasmic portion of the chain corresponds to 1-45; it reads MGSIGNGRSDSVVGIQMPPAGSKMVLEPEALQVTTSPVPRWPRLG. A helical transmembrane segment spans residues 46–66; that stretch reads VVMVATRAVAMVMALLSMSLM. Over 67-95 the chain is Extracellular; sequence VSSKQRGILTIFGIEIPLDANWSFSYSLQ. Asn-87 carries N-linked (GlcNAc...) asparagine glycosylation. The helical transmembrane segment at 96–116 threads the bilayer; that stretch reads FLVAMSTASAAYSLAQLLLIA. Topologically, residues 117 to 131 are cytoplasmic; sequence HKAVKKSPIVPSRRH. A helical transmembrane segment spans residues 132 to 152; that stretch reads AWLLFAGDQVFSLAMMSAGSA. Residues 153–186 lie on the Extracellular side of the membrane; that stretch reads AAAVANLNRTGIRHTALPNFCKPLPRFCDLSAVS. Asn-160 carries N-linked (GlcNAc...) asparagine glycosylation. A helical transmembrane segment spans residues 187–207; it reads IACAFLSCVFLAASAVIDVIW. Residues 208–211 are Cytoplasmic-facing; sequence LSSP.

Belongs to the Casparian strip membrane proteins (CASP) family. Homodimer and heterodimers.

It localises to the cell membrane. The chain is CASP-like protein 3A1 from Sorghum bicolor (Sorghum).